The primary structure comprises 4561 residues: StAR-related lipid transfer protein 9 (4561 aa).

The Kinesin motor domain occupies 3 to 384; sequence NVQVAVRVRP…MRYASNAKNI (382 aa). Residue 103–110 coordinates ATP; it reads GQTGSGKT. Over residues 307-321 the composition is skewed to low complexity; it reads SSGGDSGVPSTTSGA. The disordered stretch occupies residues 307-330; that stretch reads SSGGDSGVPSTTSGASSGGGPARR. Positions 482–533 constitute an FHA domain; it reads TKIGRIDSDQEQDIVLQGQWIERDHCTITSTCGVVILRPTQGARCTVNGREV. Disordered regions lie at residues 784–805, 873–1064, and 1092–1153; these read SRAPSWASSSNTSGPGSQRRSR, SRWR…DTES, and WNLP…PSDS. Polar residues-rich tracts occupy residues 789–805, 884–903, 911–920, and 939–948; these read WASSSNTSGPGSQRRSR, ASTQGTHLTVSHKSVSSQEI, CQMSSQGQST, and RWASVNTKTG. Basic and acidic residues-rich tracts occupy residues 1046 to 1060 and 1124 to 1135; these read RPIKDPVREEDRDLS and SRGEYSMKDHGH. Phosphoserine is present on Ser1164. Disordered stretches follow at residues 1288 to 1392, 1700 to 1767, 1959 to 1980, 2077 to 2120, 2320 to 2356, 2384 to 2427, 2439 to 2467, 2622 to 2656, 2712 to 2735, 2777 to 2800, 3002 to 3067, 3185 to 3207, 3246 to 3286, 3645 to 3703, 3790 to 3847, and 3863 to 3913; these read PSGD…SDMS, REAW…EEEN, ECKAHGQSQEVQSKEEPLEEKQ, TNAT…ADRL, LATGVGDQDHSGETRSSSPQERASGDVSTTHTPLGGS, VSTS…SSLD, FLLQEDSNQGEEERQKAEETSEDQQLPNS, KPRQFCGASGRSDSSEVIEKRKEASRTKSSVDPLP, KDSILGHQEPRSLDSTHGGGSEKI, TGLEETKASPKSGAVHPEAPGNVG, RSVE…PGTL, AQTEPSQPAAQTHSQHCSDREQL, ELNL…TSLK, EGAA…LRPE, SDLA…PQQS, and QPKT…GRTT. The segment covering 1300–1321 has biased composition (basic and acidic residues); it reads DIHEIQPHDEKPKHWLSIEEPK. Composition is skewed to polar residues over residues 1328–1360 and 1722–1741; these read LPQSSTEPPCSSDLYATSASDTSKPSVCESQGL and PKLSQSQNSKIDSPQQTTTK. 2 stretches are compositionally biased toward basic and acidic residues: residues 1754–1767 and 1970–1980; these read ELGKHSRNMREEEN and QSKEEPLEEKQ. The segment covering 2077 to 2091 has biased composition (polar residues); that stretch reads TNATSNNNTQIQKLT. The segment covering 2096 to 2110 has biased composition (basic and acidic residues); sequence RSREYVQTRESESEH. Polar residues-rich tracts occupy residues 2333–2351 and 2399–2408; these read TRSSSPQERASGDVSTTHT and TSTGSTTQEA. Residues 2414-2463 adopt a coiled-coil conformation; it reads EATVQKERKNSSLDRISRQAEKRVSFLLQEDSNQGEEERQKAEETSEDQQ. The span at 2417 to 2427 shows a compositional bias: basic and acidic residues; it reads VQKERKNSSLD. Residues 2634-2647 are compositionally biased toward basic and acidic residues; it reads DSSEVIEKRKEASR. 2 stretches are compositionally biased toward polar residues: residues 3039–3054 and 3187–3199; these read LKNNSVDENGQASQTM and TEPSQPAAQTHSQ. Pro residues predominate over residues 3689–3700; that stretch reads PASPDGSPPPSL. Over residues 3812-3835 the composition is skewed to basic and acidic residues; sequence DSQRAESLDREGKSPLGKSSERLL. Positions 3863 to 3874 are enriched in polar residues; the sequence is QPKTTTGDQSKL. A coiled-coil region spans residues 4185-4224; it reads SDIELMLQEYRRAREEAKVEIAQARDRLKERTEQEKMRIR. Positions 4344 to 4561 constitute an START domain; sequence PYQDLAKHIV…VAKLASFLRS (218 aa).

The protein belongs to the TRAFAC class myosin-kinesin ATPase superfamily. Kinesin family. In terms of assembly, interacts with ATAD3A.

The protein localises to the cytoplasm. It localises to the cytoskeleton. It is found in the microtubule organizing center. The protein resides in the centrosome. Its subcellular location is the centriole. The protein localises to the nucleus. In terms of biological role, microtubule-dependent motor protein required for spindle pole assembly during mitosis. Required to stabilize the pericentriolar material (PCM). The polypeptide is StAR-related lipid transfer protein 9 (Stard9) (Mus musculus (Mouse)).